Here is a 227-residue protein sequence, read N- to C-terminus: Large ribosomal subunit protein uL3 (227 aa).

An N5-methylglutamine modification is found at Gln-151.

It belongs to the universal ribosomal protein uL3 family. In terms of assembly, part of the 50S ribosomal subunit. Forms a cluster with proteins L14 and L19. Post-translationally, methylated by PrmB.

Functionally, one of the primary rRNA binding proteins, it binds directly near the 3'-end of the 23S rRNA, where it nucleates assembly of the 50S subunit. The chain is Large ribosomal subunit protein uL3 from Gluconacetobacter diazotrophicus (strain ATCC 49037 / DSM 5601 / CCUG 37298 / CIP 103539 / LMG 7603 / PAl5).